The primary structure comprises 994 residues: Chloride channel protein 1 (994 aa).

The Cytoplasmic segment spans residues Met-1–Trp-118. The tract at residues Ser-37 to Ile-61 is disordered. The helical transmembrane segment at Ile-119 to Tyr-150 threads the bilayer. The Extracellular portion of the chain corresponds to Ala-151 to Pro-158. A helical transmembrane segment spans residues Leu-159–Cys-179. Residues Gln-180 to Ser-183 lie on the Cytoplasmic side of the membrane. Positions Pro-184 to Ser-189 form an intramembrane region, note=Loop between two helices. Residues Gly-188 to Pro-192 carry the Selectivity filter part_1 motif. Residue Ser-189 coordinates chloride. The segment at residues Gly-190–Lys-195 is an intramembrane region (helical). The Cytoplasmic segment spans residues Thr-196–Thr-208. An intramembrane region (helical) is located at residues Leu-209–Gly-224. An intramembrane region (note=Loop between two helices) is located at residues Ser-225–Gly-230. A Selectivity filter part_2 motif is present at residues Gly-230–Pro-234. The segment at residues Lys-231–Leu-246 is an intramembrane region (helical). Over Ser-247–Thr-268 the chain is Cytoplasmic. 2 consecutive intramembrane regions (helical) follow at residues Val-269–Gly-280 and Thr-281–Ile-290. Topologically, residues Glu-291–Asn-301 are cytoplasmic. Residues Tyr-302–Val-321 traverse the membrane as a helical segment. Over Trp-322–Glu-347 the chain is Extracellular. The chain crosses the membrane as a helical span at residues Leu-348–Val-376. The Cytoplasmic segment spans residues Arg-377–Arg-390. A helical membrane pass occupies residues Leu-391–Pro-408. Residues Gly-409–Met-414 are Extracellular-facing. The note=Loop between two helices intramembrane region spans Ala-415–Leu-418. Positions Met-419–Thr-426 form an intramembrane region, helical. Residues Leu-427 to Val-457 are Extracellular-facing. Residues Ile-458–Thr-475 constitute an intramembrane region (helical). The segment at residues Thr-476–Gly-482 is an intramembrane region (note=Loop between two helices). The Selectivity filter part_3 signature appears at Gly-482–Pro-486. Residues Gly-483–Val-498 constitute an intramembrane region (helical). Phe-484 contributes to the chloride binding site. Over Gly-499–Pro-521 the chain is Extracellular. Positions Gly-522 to His-538 form an intramembrane region, helical. Positions Thr-539–Val-540 form an intramembrane region, note=Loop between two helices. Residues Ser-541 to Ala-554 constitute an intramembrane region (helical). Topologically, residues His-555–Leu-557 are extracellular. An intramembrane region (helical) is located at residues Pro-558–Gln-571. Positions Ser-572–Pro-575 form an intramembrane region, note=Loop between two helices. The helical intramembrane region spans Ser-576–Tyr-578. Chloride is bound at residue Tyr-578. The Cytoplasmic segment spans residues Asp-579–Leu-994. The CBS 1 domain occupies Met-609 to Glu-668. 3 disordered regions span residues Glu-710–Gln-769, Thr-880–Pro-923, and Asn-965–Leu-994. The span at Thr-725–Pro-741 shows a compositional bias: pro residues. Residues Ile-827–Ser-882 enclose the CBS 2 domain. Ser-892 is modified (phosphoserine). Residues Asp-985–Leu-994 are compositionally biased toward acidic residues.

It belongs to the chloride channel (TC 2.A.49) family. ClC-1/CLCN1 subfamily. As to quaternary structure, homodimer. Predominantly expressed in skeletal muscles.

The protein localises to the cell membrane. It localises to the sarcolemma. Its subcellular location is the T-tubule. The catalysed reaction is chloride(in) = chloride(out). The enzyme catalyses bromide(in) = bromide(out). It catalyses the reaction iodide(out) = iodide(in). It carries out the reaction thiocyanate(in) = thiocyanate(out). The catalysed reaction is nitrate(in) = nitrate(out). With respect to regulation, modulated by membrane voltage with depolarization favouring channel opening and hyperpolarization favouring channel closure. Inhibited by acidic pH and ATP binding due to a shift of voltage dependence of common gating to more positive voltages. Inhibited by 9-anthracene-carboxylic acid. Functionally, voltage-gated chloride channel involved in skeletal muscle excitability. Generates most of the plasma membrane chloride conductance in skeletal muscle fibers, stabilizes the resting membrane potential and contributes to the repolarization phase during action potential firing. Forms a homodimeric channel where each subunit has its own ion conduction pathway. Conducts double-barreled currents controlled by two types of gates, two fast glutamate gates that control each subunit independently and a slow common gate that opens and shuts off both subunits simultaneously. Has a significant open probability at muscle resting potential and is further activated upon membrane depolarization. Permeable to small monovalent anions with ion selectivity for chloride &gt; thiocyanate &gt; bromide &gt; nitrate &gt; iodide. The sequence is that of Chloride channel protein 1 (Clcn1) from Rattus norvegicus (Rat).